Reading from the N-terminus, the 408-residue chain is MKVLVINAGSSSLKYQLIDMTNESPLAIGLCERIGIDNSIITQKRSDGKKLEKQTDLPNHKVALEEVVKALTDSELGVIKSMDEINAVGHRVVHGGEKFTSSALIDEGVEQAIKDCFELAPLHNPPNMMGITACQEIMPGVPMVAVFDTAFHQTIPAYAYMYALPYTLYEKYGIRKYGFHGTSHFYVARRAAAMLGKPEEEVKVITCHLGNGSSITAVNGGKSVETTMGFTPLEGVAMGTRCGSIDPAVVPFVMEKEGLTTREIDTLMNKKSGVLGVSGLSNDFRDLDEAASKGNQRAELALEIFAYKIKKVIGEYSAVLNGADAVVFTAGIGENSASIRKRILSGLDGLGIEIDEEKNKIRGQEIDISTPDAKVRVLVIPTNEELTIARDTKEICETEVKLRRSVSI.

N7 provides a ligand contact to Mg(2+). An ATP-binding site is contributed by K14. Position 91 (R91) interacts with substrate. D148 functions as the Proton donor/acceptor in the catalytic mechanism. ATP contacts are provided by residues 208–212 (HLGNG), 283–285 (DFR), and 331–335 (GIGEN). E384 contributes to the Mg(2+) binding site.

This sequence belongs to the acetokinase family. As to quaternary structure, homodimer. It depends on Mg(2+) as a cofactor. The cofactor is Mn(2+).

Its subcellular location is the cytoplasm. It carries out the reaction acetate + ATP = acetyl phosphate + ADP. It participates in metabolic intermediate biosynthesis; acetyl-CoA biosynthesis; acetyl-CoA from acetate: step 1/2. In terms of biological role, catalyzes the formation of acetyl phosphate from acetate and ATP. Can also catalyze the reverse reaction. This is Acetate kinase from Methanosarcina acetivorans (strain ATCC 35395 / DSM 2834 / JCM 12185 / C2A).